The following is a 505-amino-acid chain: DEAD-box ATP-dependent RNA helicase 8 (505 aa).

Residues 1–85 (MNNRGRYPPG…GQIPGGNSNG (85 aa)) form a disordered region. The segment covering 20–31 (PNPNYQSRSGYQ) has biased composition (polar residues). The segment covering 43–71 (NYAQNHQQQFQQAPSQPHQYQQQQQQQQQ) has biased composition (low complexity). The Q motif motif lies at 131–159 (NEFEDYFLKRELLMGIYEKGFERPSPIQE). The 171-residue stretch at 162-332 (IPIALTGRDI…DRFLTNPYVI (171 aa)) folds into the Helicase ATP-binding domain. Residue 175–182 (AKNGTGKT) coordinates ATP. The residue at position 237 (T237) is a Phosphothreonine. The DEAD box motif lies at 280–283 (DEAD). Residues 342-502 (GITQFYAFVE…QIPPHIDQAI (161 aa)) form the Helicase C-terminal domain.

Belongs to the DEAD box helicase family. DDX6/DHH1 subfamily.

The protein localises to the cytoplasm. It is found in the P-body. It catalyses the reaction ATP + H2O = ADP + phosphate + H(+). Functionally, ATP-dependent RNA helicase involved in mRNA turnover, and more specifically in mRNA decapping. The polypeptide is DEAD-box ATP-dependent RNA helicase 8 (RH8) (Arabidopsis thaliana (Mouse-ear cress)).